The primary structure comprises 505 residues: Maturase K (505 aa).

It belongs to the intron maturase 2 family. MatK subfamily.

The protein resides in the plastid. Its subcellular location is the chloroplast. Functionally, usually encoded in the trnK tRNA gene intron. Probably assists in splicing its own and other chloroplast group II introns. The protein is Maturase K of Barclaya longifolia (Orchid lily).